A 508-amino-acid polypeptide reads, in one-letter code: Probable protein kinase UbiB (508 aa).

The 377-residue stretch at 118 to 494 (DFDLKPVASA…QKRQNFLLLL (377 aa)) folds into the Protein kinase domain. ATP-binding positions include 124 to 132 (VASASVAQV) and K151. The Proton acceptor role is filled by D286. A helical membrane pass occupies residues 488 to 508 (QNFLLLLIAILLAALLAKSLL).

The protein belongs to the ABC1 family. UbiB subfamily.

It localises to the cell inner membrane. Its pathway is cofactor biosynthesis; ubiquinone biosynthesis [regulation]. In terms of biological role, is probably a protein kinase regulator of UbiI activity which is involved in aerobic coenzyme Q (ubiquinone) biosynthesis. In Chromobacterium violaceum (strain ATCC 12472 / DSM 30191 / JCM 1249 / CCUG 213 / NBRC 12614 / NCIMB 9131 / NCTC 9757 / MK), this protein is Probable protein kinase UbiB.